The sequence spans 204 residues: Somatotropin (204 aa).

Positions Met1–Ser17 are cleaved as a signal peptide. Gln18 is subject to Pyrrolidone carboxylic acid. His36 serves as a coordination point for Zn(2+). An intrachain disulfide couples Cys69 to Cys177. Residue Glu186 coordinates Zn(2+). Cys194 and Cys202 are joined by a disulfide.

Belongs to the somatotropin/prolactin family.

The protein resides in the secreted. Its function is as follows. Growth hormone plays an important role in growth control and is involved in the regulation of several anabolic processes. Implicated as an osmoregulatory substance important for seawater adaptation. In Lates calcarifer (Barramundi), this protein is Somatotropin (gh).